Reading from the N-terminus, the 322-residue chain is Homoserine kinase (322 aa).

107-117 contacts ATP; sequence PLSSGMGGSAA.

This sequence belongs to the GHMP kinase family. Homoserine kinase subfamily.

The protein resides in the cytoplasm. It carries out the reaction L-homoserine + ATP = O-phospho-L-homoserine + ADP + H(+). It functions in the pathway amino-acid biosynthesis; L-threonine biosynthesis; L-threonine from L-aspartate: step 4/5. Its function is as follows. Catalyzes the ATP-dependent phosphorylation of L-homoserine to L-homoserine phosphate. The sequence is that of Homoserine kinase from Xylella fastidiosa (strain 9a5c).